The primary structure comprises 203 residues: Large ribosomal subunit protein bL25 (203 aa).

This sequence belongs to the bacterial ribosomal protein bL25 family. CTC subfamily. In terms of assembly, part of the 50S ribosomal subunit; part of the 5S rRNA/L5/L18/L25 subcomplex. Contacts the 5S rRNA. Binds to the 5S rRNA independently of L5 and L18.

In terms of biological role, this is one of the proteins that binds to the 5S RNA in the ribosome where it forms part of the central protuberance. This Rickettsia typhi (strain ATCC VR-144 / Wilmington) protein is Large ribosomal subunit protein bL25.